A 417-amino-acid chain; its full sequence is Tryptophan synthase beta chain (417 aa).

Lysine 110 carries the post-translational modification N6-(pyridoxal phosphate)lysine.

Belongs to the TrpB family. As to quaternary structure, tetramer of two alpha and two beta chains. It depends on pyridoxal 5'-phosphate as a cofactor.

The catalysed reaction is (1S,2R)-1-C-(indol-3-yl)glycerol 3-phosphate + L-serine = D-glyceraldehyde 3-phosphate + L-tryptophan + H2O. Its pathway is amino-acid biosynthesis; L-tryptophan biosynthesis; L-tryptophan from chorismate: step 5/5. In terms of biological role, the beta subunit is responsible for the synthesis of L-tryptophan from indole and L-serine. In Prochlorococcus marinus (strain NATL1A), this protein is Tryptophan synthase beta chain.